The sequence spans 273 residues: Putative pyruvate, phosphate dikinase regulatory protein (273 aa).

153–160 contributes to the ADP binding site; it reads GVSRTSKT.

This sequence belongs to the pyruvate, phosphate/water dikinase regulatory protein family. PDRP subfamily.

It carries out the reaction N(tele)-phospho-L-histidyl/L-threonyl-[pyruvate, phosphate dikinase] + ADP = N(tele)-phospho-L-histidyl/O-phospho-L-threonyl-[pyruvate, phosphate dikinase] + AMP + H(+). The catalysed reaction is N(tele)-phospho-L-histidyl/O-phospho-L-threonyl-[pyruvate, phosphate dikinase] + phosphate + H(+) = N(tele)-phospho-L-histidyl/L-threonyl-[pyruvate, phosphate dikinase] + diphosphate. In terms of biological role, bifunctional serine/threonine kinase and phosphorylase involved in the regulation of the pyruvate, phosphate dikinase (PPDK) by catalyzing its phosphorylation/dephosphorylation. This Sinorhizobium fredii (strain NBRC 101917 / NGR234) protein is Putative pyruvate, phosphate dikinase regulatory protein.